Consider the following 93-residue polypeptide: UPF0250 protein PA3998 (93 aa).

Belongs to the UPF0250 family.

This chain is UPF0250 protein PA3998, found in Pseudomonas aeruginosa (strain ATCC 15692 / DSM 22644 / CIP 104116 / JCM 14847 / LMG 12228 / 1C / PRS 101 / PAO1).